A 170-amino-acid polypeptide reads, in one-letter code: Adenine phosphoribosyltransferase (170 aa).

Belongs to the purine/pyrimidine phosphoribosyltransferase family. In terms of assembly, homodimer.

It localises to the cytoplasm. It catalyses the reaction AMP + diphosphate = 5-phospho-alpha-D-ribose 1-diphosphate + adenine. It participates in purine metabolism; AMP biosynthesis via salvage pathway; AMP from adenine: step 1/1. Catalyzes a salvage reaction resulting in the formation of AMP, that is energically less costly than de novo synthesis. The polypeptide is Adenine phosphoribosyltransferase (Mycoplasma capricolum subsp. capricolum (strain California kid / ATCC 27343 / NCTC 10154)).